A 543-amino-acid polypeptide reads, in one-letter code: Tetrahydroberberine oxidase (543 aa).

An N-terminal signal peptide occupies residues 1–26 (MIPNSSSSSILSLLVLLLFSTSSSWA). A disulfide bond links Cys-37 and Cys-97. 9 N-linked (GlcNAc...) asparagine glycosylation sites follow: Asn-54, Asn-74, Asn-135, Asn-142, Asn-162, Asn-295, Asn-335, Asn-440, and Asn-482. Residues 75 to 250 (STQKPEFIIT…LSWKVKLVPV (176 aa)) enclose the FAD-binding PCMH-type domain. A cross-link (6-(S-cysteinyl)-8alpha-(pros-histidyl)-FAD (His-Cys)) is located at residues 112 to 175 (HDVEGLSYVS…NTLGFPAGFC (64 aa)).

This sequence belongs to the oxygen-dependent FAD-linked oxidoreductase family. FAD is required as a cofactor. Post-translationally, the FAD cofactor is bound via a bicovalent 6-S-cysteinyl, 8alpha-N1-histidyl FAD linkage.

It carries out the reaction (S)-canadine + 2 O2 + H(+) = berberine + 2 H2O2. Its function is as follows. Catalyzes the oxidation of different tetrahydroprotoberberines, such as (S)-canadine, (S)-scoulerine and (S)-tetrahydropalmatine. The sequence is that of Tetrahydroberberine oxidase from Argemone mexicana (Mexican prickly poppy).